The sequence spans 1415 residues: DNA-directed RNA polymerase subunit beta' (1415 aa).

Zn(2+) is bound by residues Cys70, Cys72, Cys85, and Cys88. Residues Asp461, Asp463, and Asp465 each coordinate Mg(2+). Residues Cys820, Cys894, Cys901, and Cys904 each contribute to the Zn(2+) site.

This sequence belongs to the RNA polymerase beta' chain family. In terms of assembly, the RNAP catalytic core consists of 2 alpha, 1 beta, 1 beta' and 1 omega subunit. When a sigma factor is associated with the core the holoenzyme is formed, which can initiate transcription. Mg(2+) is required as a cofactor. It depends on Zn(2+) as a cofactor.

It carries out the reaction RNA(n) + a ribonucleoside 5'-triphosphate = RNA(n+1) + diphosphate. Its function is as follows. DNA-dependent RNA polymerase catalyzes the transcription of DNA into RNA using the four ribonucleoside triphosphates as substrates. This Cupriavidus necator (strain ATCC 17699 / DSM 428 / KCTC 22496 / NCIMB 10442 / H16 / Stanier 337) (Ralstonia eutropha) protein is DNA-directed RNA polymerase subunit beta'.